We begin with the raw amino-acid sequence, 292 residues long: 4-hydroxy-tetrahydrodipicolinate synthase (292 aa).

Thr-45 is a binding site for pyruvate. Tyr-133 serves as the catalytic Proton donor/acceptor. Lys-161 serves as the catalytic Schiff-base intermediate with substrate. Pyruvate is bound at residue Ile-203.

This sequence belongs to the DapA family. Homotetramer; dimer of dimers.

Its subcellular location is the cytoplasm. It catalyses the reaction L-aspartate 4-semialdehyde + pyruvate = (2S,4S)-4-hydroxy-2,3,4,5-tetrahydrodipicolinate + H2O + H(+). Its pathway is amino-acid biosynthesis; L-lysine biosynthesis via DAP pathway; (S)-tetrahydrodipicolinate from L-aspartate: step 3/4. In terms of biological role, catalyzes the condensation of (S)-aspartate-beta-semialdehyde [(S)-ASA] and pyruvate to 4-hydroxy-tetrahydrodipicolinate (HTPA). The sequence is that of 4-hydroxy-tetrahydrodipicolinate synthase from Aromatoleum aromaticum (strain DSM 19018 / LMG 30748 / EbN1) (Azoarcus sp. (strain EbN1)).